A 125-amino-acid polypeptide reads, in one-letter code: Large ribosomal subunit protein bL12 (125 aa).

This sequence belongs to the bacterial ribosomal protein bL12 family. Homodimer. Part of the ribosomal stalk of the 50S ribosomal subunit. Forms a multimeric L10(L12)X complex, where L10 forms an elongated spine to which 2 to 4 L12 dimers bind in a sequential fashion. Binds GTP-bound translation factors.

Its function is as follows. Forms part of the ribosomal stalk which helps the ribosome interact with GTP-bound translation factors. Is thus essential for accurate translation. This Ruegeria sp. (strain TM1040) (Silicibacter sp.) protein is Large ribosomal subunit protein bL12.